The following is a 1041-amino-acid chain: Nuclear pore complex protein NUP98A (1041 aa).

Positions M1–P34 are enriched in polar residues. The segment at M1–S44 is disordered. 44 consecutive repeat copies span residues F2–G3, F8–G9, F17–G18, F23–G24, F41–G42, F56–G57, F64–G65, F79–G80, F87–G88, F94–G95, F103–G104, F109–G110, F124–G125, F135–G136, F140–G141, F146–G147, F154–G155, F162–G163, F170–G171, F178–G179, F186–G187, F194–G195, F202–G203, F210–G211, F217–G218, F222–G223, F228–G229, F236–G237, F244–G245, F252–G253, F260–G261, F268–G269, F276–G277, F284–G285, F294–G295, F300–G301, F307–G308, F312–G313, F319–G320, F329–G330, F334–G335, F339–G340, F411–G412, and F427–G428. The segment at F2 to G677 is 65 X 2 AA repeats of F-G. Residues P98 to G171 are disordered. Residues S117–G171 are compositionally biased toward polar residues. Disordered stretches follow at residues T315 to R347 and Q392 to F447. Low complexity predominate over residues T430–F447. 21 tandem repeats follow at residues F459 to G460, F466 to G467, F471 to G472, F480 to G481, F491 to G492, F497 to G498, F506 to G507, F514 to G515, F521 to G522, F533 to G534, F555 to G556, F562 to G563, F565 to G566, F573 to G574, F586 to G587, F604 to G605, F627 to G628, F632 to G633, F650 to G651, F655 to G656, and F676 to G677. Residues S517–G526 show a composition bias toward low complexity. The tract at residues S517–S560 is disordered. Over residues F533 to S560 the composition is skewed to polar residues. Positions K734 to G860 are disordered. A compositionally biased stretch (basic and acidic residues) spans S782–R793. Positions T831 to D846 are enriched in polar residues. Residues Q885 to F1027 enclose the Peptidase S59 domain.

The protein belongs to the nucleoporin GLFG family. In terms of assembly, part of the nuclear pore complex (NPC). The NPC has an eight-fold symmetrical structure comprising a central transport channel and two rings, the cytoplasmic and nuclear rings, to which eight filaments are attached. The cytoplasmic filaments have loose ends, while the nuclear filaments are joined in a distal ring, forming a nuclear basket. NPCs are highly dynamic in configuration and composition, and can be devided in 3 subcomplexes, the NUP62 subcomplex, the NUP107-160 subcomplex and the NUP93 subcomplex, containing approximately 30 different nucleoporin proteins.

The protein localises to the nucleus. It is found in the nuclear pore complex. The polypeptide is Nuclear pore complex protein NUP98A (Arabidopsis thaliana (Mouse-ear cress)).